The chain runs to 228 residues: MKLVLIRHGESAWNLENRFTGWKDVDLSPKGMEEAKSAGKILKEMNLVFDVAYTSYLKRAIKTLNIVLEEMDELYIPVYKSWRLNERHYGALQGLNKAETAKKYGDEQVHIWRRSFDVAPPSIDKNSEYYPKSDRRYADLADSDIPLGESLKDTIARVLPYWHSDISKSLQEEKNVIVAAHGNSLRALIKYLLNISNEDILNLNLVTGKPMVFEIDKDLKVLSSPELF.

Substrate contacts are provided by residues 7-14, 20-21, Arg-59, 86-89, Lys-97, 113-114, and 182-183; these read RHGESAWN, TG, ERHY, RR, and GN. Catalysis depends on His-8, which acts as the Tele-phosphohistidine intermediate. Residue Glu-86 is the Proton donor/acceptor of the active site.

The protein belongs to the phosphoglycerate mutase family. BPG-dependent PGAM subfamily.

It catalyses the reaction (2R)-2-phosphoglycerate = (2R)-3-phosphoglycerate. The protein operates within carbohydrate degradation; glycolysis; pyruvate from D-glyceraldehyde 3-phosphate: step 3/5. In terms of biological role, catalyzes the interconversion of 2-phosphoglycerate and 3-phosphoglycerate. The polypeptide is 2,3-bisphosphoglycerate-dependent phosphoglycerate mutase (Fusobacterium nucleatum subsp. nucleatum (strain ATCC 25586 / DSM 15643 / BCRC 10681 / CIP 101130 / JCM 8532 / KCTC 2640 / LMG 13131 / VPI 4355)).